Reading from the N-terminus, the 344-residue chain is MSNTQLSYKDAGVDIHTGNELVERIKGDVKRTRRSEVMGGLGGFGALCALPTKYKEPILVSGTDGVGTKLRLAIDLKKHDTIGQDLVAMCVNDLIVQGAEPLFFLDYYATGKLDVDVAASVIKGIADGCEMSGCALVGGETTEMPGMYHEGDYDLAGFCVGVVEKSEIIDGTAVKTGDTLIALGSSGAHSNGYSLIRKVLEVSGANPADLLEGKPLSEHFLAPTKIYVKSILQLIKQTEVHAIAHLTGGGFWENIPRVLPANTKAVIDESSWQWPAIFNWLQEKGNISRYEMYRTFNCGVGMVISLPEKEVETALALLEQAGEKAWVIGKIEHLGEGEAQVEIQ.

The protein belongs to the AIR synthase family.

The protein resides in the cytoplasm. It catalyses the reaction 2-formamido-N(1)-(5-O-phospho-beta-D-ribosyl)acetamidine + ATP = 5-amino-1-(5-phospho-beta-D-ribosyl)imidazole + ADP + phosphate + H(+). Its pathway is purine metabolism; IMP biosynthesis via de novo pathway; 5-amino-1-(5-phospho-D-ribosyl)imidazole from N(2)-formyl-N(1)-(5-phospho-D-ribosyl)glycinamide: step 2/2. This Haemophilus influenzae (strain 86-028NP) protein is Phosphoribosylformylglycinamidine cyclo-ligase.